A 204-amino-acid chain; its full sequence is Small ribosomal subunit protein uS4 (204 aa).

The S4 RNA-binding domain occupies Arg95–Asn157.

It belongs to the universal ribosomal protein uS4 family. In terms of assembly, part of the 30S ribosomal subunit. Contacts protein S5. The interaction surface between S4 and S5 is involved in control of translational fidelity.

One of the primary rRNA binding proteins, it binds directly to 16S rRNA where it nucleates assembly of the body of the 30S subunit. In terms of biological role, with S5 and S12 plays an important role in translational accuracy. This is Small ribosomal subunit protein uS4 from Treponema pallidum (strain Nichols).